Here is an 89-residue protein sequence, read N- to C-terminus: cAMP-regulated phosphoprotein 21 (89 aa).

Positions 1-89 (MSEPGDLSQT…GGESLQDQTL (89 aa)) are disordered. The residue at position 2 (Ser-2) is an N-acetylserine. A phosphoserine mark is found at Ser-33 and Ser-56.

As to quaternary structure, interacts with CALM1. Post-translationally, phosphorylation at Ser-56 favors interaction with CALM1.

Its subcellular location is the cytoplasm. In terms of biological role, may act as a competitive inhibitor of calmodulin-dependent enzymes such as calcineurin in neurons. The chain is cAMP-regulated phosphoprotein 21 (ARPP21) from Bos taurus (Bovine).